Here is a 93-residue protein sequence, read N- to C-terminus: MSSVRNIAALALVLLVLAEWSAAMPTTDKDKERLLNTVDLIDDDGSIETALINYLFTKQIVKRLRSQLDIGDLQRKRSYWKQCAFNAVSCFGK.

Residues 1–23 (MSSVRNIAALALVLLVLAEWSAA) form the signal peptide. A propeptide spanning residues 24-61 (MPTTDKDKERLLNTVDLIDDDGSIETALINYLFTKQIV) is cleaved from the precursor. C83 and C90 form a disulfide bridge.

It is found in the secreted. Functionally, inhibits juvenile hormone biosynthesis. This Camponotus floridanus (Florida carpenter ant) protein is Allatostatin C.